Consider the following 480-residue polypeptide: Gamma-aminobutyric acid receptor subunit rho-1 (480 aa).

Positions 1-21 (MLAVRNMKFGIFLLWWGWVLA) are cleaved as a signal peptide. Over 22-281 (AESTVHWPGR…LYINFTLRRH (260 aa)) the chain is Extracellular. Positions 31 to 67 (REVHEPSKKGSRPQRQRRGAHDDAHKQGSPILKRSSD) are disordered. Residues 39–48 (KGSRPQRQRR) show a composition bias toward basic residues. Arg-126 is a binding site for 4-aminobutanoate. Residue Asn-141 is glycosylated (N-linked (GlcNAc...) asparagine). Residue Ser-190 coordinates 4-aminobutanoate. Cys-199 and Cys-213 are disulfide-bonded. Glu-218 provides a ligand contact to 4-aminobutanoate. 2 N-linked (GlcNAc...) asparagine glycosylation sites follow: Asn-235 and Asn-275. Residues 282–302 (IFFFLLQTYFPATLMVMLSWV) traverse the membrane as a helical segment. Residues 303 to 314 (SFWIDRRAVPAR) lie on the Cytoplasmic side of the membrane. Residues 315 to 335 (VPLGITTVLTMSTIITGVNAS) form a helical membrane-spanning segment. The Extracellular portion of the chain corresponds to 336–346 (MPRVSYIKAVD). Residues 347 to 367 (IYLWVSFVFVFLSVLEYAAVN) traverse the membrane as a helical segment. The Cytoplasmic portion of the chain corresponds to 368 to 458 (YLTTVQERKE…MRINTHAIDK (91 aa)). A helical transmembrane segment spans residues 459-479 (YSRIIFPAAYILFNLIYWSIF). A topological domain (extracellular) is located at residue Ser-480.

This sequence belongs to the ligand-gated ion channel (TC 1.A.9) family. Gamma-aminobutyric acid receptor (TC 1.A.9.5) subfamily. GABRR1 sub-subfamily. As to quaternary structure, three rho subunits (rho-1/GBRR1, rho-2/GBRR2 and rho-3/GBRR3) coassemble either to form functional homopentamers or heteropentamers. Rho-1/GBRR1 subunits can also associate with alpha-1/GBRA1 subunits to form a functional GABAAR. Interacts with SQSTM1.

The protein resides in the postsynaptic cell membrane. Its subcellular location is the cell membrane. It carries out the reaction chloride(in) = chloride(out). Its activity is regulated as follows. Inhibited by TPMPA, a rho-specific antagonist. Inhibited by picrotoxin, when forming a homopentamer. In contrast with other GABAARs, rho-1 GABAAR is not inhibited by bicuculline, when forming a homopentamer. Down-regulated by external protons when forming a homopentamer. In terms of biological role, rho subunit of the pentameric ligand-gated chloride channels responsible for mediating the effects of gamma-aminobutyric acid (GABA), the major inhibitory neurotransmitter in the brain. Rho-containing GABA-gated chloride channels are a subclass of GABA(A) receptors (GABAARs) entirely composed of rho subunits, where GABA molecules bind at the rho intersubunit interfaces. When activated by GABA, rho-GABAARs selectively allow the flow of chloride anions across the cell membrane down their electrochemical gradient. Rho-1 subunits are primarily expressed in retina where rho-1-containing GABAARs may play a role in retinal neurotransmission. Rho-1 GABAARs are also involved in neuronal tonic (extrasynaptic) and phasic (synaptic) transmission in the Purkinje neurons of the cerebellum. Rho-1 GABAARs may also contribute to the regulation of glial development in the cerebellum by controlling extrasynaptic transmission. This Rattus norvegicus (Rat) protein is Gamma-aminobutyric acid receptor subunit rho-1.